Consider the following 271-residue polypeptide: Cobalt import ATP-binding protein CbiO (271 aa).

The ABC transporter domain maps to 2–236; the sequence is LATSDLWFRY…TEAMEHAGLT (235 aa). 34–41 provides a ligand contact to ATP; that stretch reads GANGCGKS.

This sequence belongs to the ABC transporter superfamily. Cobalt importer (TC 3.A.1.18.1) family. Forms an energy-coupling factor (ECF) transporter complex composed of an ATP-binding protein (A component, CbiO), a transmembrane protein (T component, CbiQ) and 2 possible substrate-capture proteins (S components, CbiM and CbiN) of unknown stoichimetry. Expression of just CbiMN in E.coli confers some cobalt uptake.

The protein resides in the cell inner membrane. It participates in cofactor biosynthesis; adenosylcobalamin biosynthesis. Its function is as follows. Part of the energy-coupling factor (ECF) transporter complex CbiMNOQ involved in cobalt import. The complex confers cobalt uptake upon expression in E.coli; can also transport nickel with a very low affinity. Presumably responsible for energy coupling to the transport system. This chain is Cobalt import ATP-binding protein CbiO, found in Salmonella typhimurium (strain LT2 / SGSC1412 / ATCC 700720).